A 768-amino-acid chain; its full sequence is Solabiose phosphorylase (768 aa).

Catalysis depends on aspartate 456, which acts as the Proton donor.

The protein belongs to the glycosyl hydrolase 94 family.

The enzyme catalyses solabiose + phosphate = D-galactose + alpha-D-glucose 1-phosphate. Catalyzes the reversible phosphorolysis of solabiose. Catalyzes the phosphorolysis and synthesis of solabiose through a sequential bi-bi mechanism involving the formation of a ternary complex. Is probably involved in the metabolism of solabiose released from solabiose-containing compounds. This is Solabiose phosphorylase from Paenibacillus borealis.